A 318-amino-acid chain; its full sequence is Methionyl-tRNA formyltransferase (318 aa).

110 to 113 (SLLP) contributes to the (6S)-5,6,7,8-tetrahydrofolate binding site.

The protein belongs to the Fmt family.

The enzyme catalyses L-methionyl-tRNA(fMet) + (6R)-10-formyltetrahydrofolate = N-formyl-L-methionyl-tRNA(fMet) + (6S)-5,6,7,8-tetrahydrofolate + H(+). Attaches a formyl group to the free amino group of methionyl-tRNA(fMet). The formyl group appears to play a dual role in the initiator identity of N-formylmethionyl-tRNA by promoting its recognition by IF2 and preventing the misappropriation of this tRNA by the elongation apparatus. The chain is Methionyl-tRNA formyltransferase from Lacticaseibacillus paracasei (strain ATCC 334 / BCRC 17002 / CCUG 31169 / CIP 107868 / KCTC 3260 / NRRL B-441) (Lactobacillus paracasei).